The sequence spans 261 residues: 3-methyl-2-oxobutanoate hydroxymethyltransferase (261 aa).

Asp44 and Asp83 together coordinate Mg(2+). 3-methyl-2-oxobutanoate-binding positions include 44–45 (DS), Asp83, and Lys112. Glu114 lines the Mg(2+) pocket. Glu181 (proton acceptor) is an active-site residue.

This sequence belongs to the PanB family. In terms of assembly, homodecamer; pentamer of dimers. Requires Mg(2+) as cofactor.

Its subcellular location is the cytoplasm. It catalyses the reaction 3-methyl-2-oxobutanoate + (6R)-5,10-methylene-5,6,7,8-tetrahydrofolate + H2O = 2-dehydropantoate + (6S)-5,6,7,8-tetrahydrofolate. It functions in the pathway cofactor biosynthesis; (R)-pantothenate biosynthesis; (R)-pantoate from 3-methyl-2-oxobutanoate: step 1/2. Its function is as follows. Catalyzes the reversible reaction in which hydroxymethyl group from 5,10-methylenetetrahydrofolate is transferred onto alpha-ketoisovalerate to form ketopantoate. This Acidithiobacillus ferrooxidans (strain ATCC 23270 / DSM 14882 / CIP 104768 / NCIMB 8455) (Ferrobacillus ferrooxidans (strain ATCC 23270)) protein is 3-methyl-2-oxobutanoate hydroxymethyltransferase.